A 309-amino-acid chain; its full sequence is MELEFLGTCSGQPSKLRNVSSLALKLLDELNEIWLFDCGEATQHQILRTNIRLRKITKIFISHNHGDHIFGLPGLLSTRSFQGDVGPLTIYGPAGIEQFVKTSLRISKTKISYPIKFVTLEEGGKIVSERGFEVYTEKLDHRIDSWGFRMVEADKAGELLMDKLAEFKVPNGPLLGKLKRGEQVELADGTVLNGKDFLGPAKKGRVVTVIYDTRSTPSIRRLADHADVLVHEATFDASEGKLARDYYHSTCTQAAETASACHVGHLYLTHVSARYVGSLASQMVKQAREIFPATTLAKDLDKFVVPMKG.

The Zn(2+) site is built by His-63, His-65, Asp-67, His-68, His-141, Asp-212, and His-270. Asp-67 acts as the Proton acceptor in catalysis.

The protein belongs to the RNase Z family. As to quaternary structure, homodimer. Zn(2+) serves as cofactor.

The catalysed reaction is Endonucleolytic cleavage of RNA, removing extra 3' nucleotides from tRNA precursor, generating 3' termini of tRNAs. A 3'-hydroxy group is left at the tRNA terminus and a 5'-phosphoryl group is left at the trailer molecule.. Zinc phosphodiesterase, which displays some tRNA 3'-processing endonuclease activity. Probably involved in tRNA maturation, by removing a 3'-trailer from precursor tRNA. The sequence is that of Ribonuclease Z from Lactobacillus delbrueckii subsp. bulgaricus (strain ATCC 11842 / DSM 20081 / BCRC 10696 / JCM 1002 / NBRC 13953 / NCIMB 11778 / NCTC 12712 / WDCM 00102 / Lb 14).